A 528-amino-acid chain; its full sequence is Glutamyl-tRNA(Gln) amidotransferase subunit B, mitochondrial (528 aa).

A mitochondrion-targeting transit peptide spans 1-21 (MSWRLSFRTNLLIYNVRRRNY).

It belongs to the GatB/GatE family. GatB subfamily. In terms of assembly, subunit of the heterotrimeric GatCAB amidotransferase (AdT) complex, composed of A, B and C subunits.

The protein localises to the mitochondrion. The catalysed reaction is L-glutamyl-tRNA(Gln) + L-glutamine + ATP + H2O = L-glutaminyl-tRNA(Gln) + L-glutamate + ADP + phosphate + H(+). In terms of biological role, allows the formation of correctly charged Gln-tRNA(Gln) through the transamidation of misacylated Glu-tRNA(Gln) in the mitochondria. The reaction takes place in the presence of glutamine and ATP through an activated gamma-phospho-Glu-tRNA(Gln). In Aedes aegypti (Yellowfever mosquito), this protein is Glutamyl-tRNA(Gln) amidotransferase subunit B, mitochondrial.